Consider the following 374-residue polypeptide: Patatin-2-Kuras 4 (374 aa).

Positions 1–11 (MILATTSSTCA) are cleaved as a signal peptide. Residues 20-217 (LSIDGGGIKG…TVGDPALLSL (198 aa)) form the PNPLA domain. The GXGXXG motif lies at 24–29 (GGGIKG). Positions 63-67 (GTSTG) match the GXSXG motif. Ser65 functions as the Nucleophile in the catalytic mechanism. An N-linked (GlcNAc...) asparagine glycan is attached at Asn103. The active-site Proton acceptor is the Asp203. A DGA/G motif is present at residues 203–205 (DGG). The stretch at 309–372 (ENALTGTTTE…DRKKLRANKA (64 aa)) forms a coiled coil.

It belongs to the patatin family.

The protein resides in the vacuole. Probable lipolytic acyl hydrolase (LAH), an activity which is thought to be involved in the response of tubers to pathogens. The chain is Patatin-2-Kuras 4 (pat2-k4) from Solanum tuberosum (Potato).